The primary structure comprises 299 residues: Taste receptor type 2 member 4 (299 aa).

Residues 1–9 (MLRLFYFSA) lie on the Extracellular side of the membrane. The helical transmembrane segment at 10–30 (IIASVILNFVGIIMNLFITVV) threads the bilayer. At 31-46 (NCKTWVKSHRISSSDR) the chain is on the cytoplasmic side. The helical transmembrane segment at 47-67 (ILFSLGITRFLMLGLFLVNTI) threads the bilayer. Residues 68 to 81 (YFVSSNXERSVYLS) lie on the Extracellular side of the membrane. Residues 82–102 (AFFVLCFMFLDSSSLWFVTLL) traverse the membrane as a helical segment. The Cytoplasmic portion of the chain corresponds to 103 to 131 (NILYCVKITNFQHSVFLLLKRNISPKIPR). Residues 132–152 (LLLACVLISAFTTCLYITLSQ) traverse the membrane as a helical segment. The Extracellular segment spans residues 153–172 (ASPFPELVTTRNNTSFNINE). N-linked (GlcNAc...) asparagine glycans are attached at residues asparagine 164 and asparagine 165. Residues 173-193 (GILSLVVSLVLSSSLQFIINV) form a helical membrane-spanning segment. Residues 194 to 230 (TSASLLIHSLRRHIQKMQKNATGFWNPQTEAHVGAMK) lie on the Cytoplasmic side of the membrane. Residues 231–251 (LMVYFLILYIPYSVATLVQYL) traverse the membrane as a helical segment. Residues 252–262 (PFYAGMDMGTK) are Extracellular-facing. A helical membrane pass occupies residues 263–283 (SICLIFATLYSPGHSVLIIIT). Over 284-299 (HPKLKTTAKKILCFKK) the chain is Cytoplasmic.

The protein belongs to the G-protein coupled receptor T2R family.

Its subcellular location is the membrane. The protein localises to the cell projection. It is found in the cilium membrane. Functionally, gustducin-coupled receptor implicated in the perception of bitter compounds in the oral cavity and the gastrointestinal tract. Signals through PLCB2 and the calcium-regulated cation channel TRPM5. In airway epithelial cells, binding of denatonium increases the intracellular calcium ion concentration and stimulates ciliary beat frequency. This is Taste receptor type 2 member 4 (TAS2R4) from Pan troglodytes (Chimpanzee).